Here is a 525-residue protein sequence, read N- to C-terminus: Mitochondrial-processing peptidase subunit alpha (525 aa).

Residues 1–33 (MAAVVLAATRLLRGSGSWGCSRLRFGPPAYRRF) constitute a mitochondrion transit peptide. At lysine 64 the chain carries N6-succinyllysine. Residue lysine 299 is modified to N6-acetyllysine.

Belongs to the peptidase M16 family. In terms of assembly, heterodimer of PMPCA (alpha) and PMPCB (beta) subunits, forming the mitochondrial processing protease (MPP) in which PMPCA is involved in substrate recognition and binding and PMPCB is the catalytic subunit. As to expression, ubiquitously expressed with highest expression in fetal tissues and adult brain, cerebellum and cerebellar vermis.

It is found in the mitochondrion matrix. The protein localises to the mitochondrion inner membrane. In terms of biological role, substrate recognition and binding subunit of the essential mitochondrial processing protease (MPP), which cleaves the mitochondrial sequence off newly imported precursors proteins. This chain is Mitochondrial-processing peptidase subunit alpha (PMPCA), found in Homo sapiens (Human).